A 101-amino-acid polypeptide reads, in one-letter code: uncharacterized protein (101 aa).

2 helical membrane-spanning segments follow: residues 52–72 and 75–95; these read VVFIIVFLTGWAAKSIIVKLL and LWRLSTLIPSFFASFFMSLLG.

The protein resides in the endoplasmic reticulum membrane. This is an uncharacterized protein from Schizosaccharomyces pombe (strain 972 / ATCC 24843) (Fission yeast).